A 370-amino-acid chain; its full sequence is Anhydro-N-acetylmuramic acid kinase (370 aa).

Residue 12–19 (GTSLDGVD) participates in ATP binding.

This sequence belongs to the anhydro-N-acetylmuramic acid kinase family.

It catalyses the reaction 1,6-anhydro-N-acetyl-beta-muramate + ATP + H2O = N-acetyl-D-muramate 6-phosphate + ADP + H(+). It participates in amino-sugar metabolism; 1,6-anhydro-N-acetylmuramate degradation. It functions in the pathway cell wall biogenesis; peptidoglycan recycling. In terms of biological role, catalyzes the specific phosphorylation of 1,6-anhydro-N-acetylmuramic acid (anhMurNAc) with the simultaneous cleavage of the 1,6-anhydro ring, generating MurNAc-6-P. Is required for the utilization of anhMurNAc either imported from the medium or derived from its own cell wall murein, and thus plays a role in cell wall recycling. The polypeptide is Anhydro-N-acetylmuramic acid kinase (Proteus mirabilis (strain HI4320)).